We begin with the raw amino-acid sequence, 436 residues long: Adenylosuccinate synthetase (436 aa).

GTP is bound by residues 21 to 27 (GDEGKGK) and 49 to 51 (GHT). Asp22 serves as the catalytic Proton acceptor. 2 residues coordinate Mg(2+): Asp22 and Gly49. IMP is bound by residues 22 to 25 (DEGK), 47 to 50 (NAGH), Thr135, Arg149, Gln230, Thr245, and Arg309. The Proton donor role is filled by His50. Position 305-311 (305-311 (TTTGRPR)) interacts with substrate. GTP contacts are provided by residues Arg311, 337–339 (KVD), and 423–425 (SSG).

The protein belongs to the adenylosuccinate synthetase family. As to quaternary structure, homodimer. Mg(2+) serves as cofactor.

It is found in the cytoplasm. It catalyses the reaction IMP + L-aspartate + GTP = N(6)-(1,2-dicarboxyethyl)-AMP + GDP + phosphate + 2 H(+). It participates in purine metabolism; AMP biosynthesis via de novo pathway; AMP from IMP: step 1/2. In terms of biological role, plays an important role in the de novo pathway of purine nucleotide biosynthesis. Catalyzes the first committed step in the biosynthesis of AMP from IMP. This is Adenylosuccinate synthetase from Thermoplasma volcanium (strain ATCC 51530 / DSM 4299 / JCM 9571 / NBRC 15438 / GSS1).